The chain runs to 191 residues: Rubrerythrin (191 aa).

One can recognise a Ferritin-like diiron domain in the interval 1-146 (MKSLKGSRTE…DFARNIKEGR (146 aa)). The Fe(3+) site is built by E20, E53, E94, E97, E128, H131, C158, C161, C174, and C177. The 39-residue stretch at 153–191 (ATKWRCRNCGYVHEGTGAPELCPACAHPKAHFELLGINW) folds into the Rubredoxin-like domain.

As to quaternary structure, homodimer. Possesses two rubredoxin-like centers and two non-sulfur oxo-bridged di-iron centers per dimer. The cofactor is Fe(3+).

It is found in the cytoplasm. Its function is as follows. May provide oxidative stress protection via catalytic reduction of intracellular hydrogen peroxide. The sequence is that of Rubrerythrin (rbr) from Nitratidesulfovibrio vulgaris (strain ATCC 29579 / DSM 644 / CCUG 34227 / NCIMB 8303 / VKM B-1760 / Hildenborough) (Desulfovibrio vulgaris).